The chain runs to 446 residues: Histidine--tRNA ligase (446 aa).

The protein belongs to the class-II aminoacyl-tRNA synthetase family. As to quaternary structure, homodimer.

The protein localises to the cytoplasm. It catalyses the reaction tRNA(His) + L-histidine + ATP = L-histidyl-tRNA(His) + AMP + diphosphate + H(+). The sequence is that of Histidine--tRNA ligase from Burkholderia pseudomallei (strain 668).